Reading from the N-terminus, the 223-residue chain is Cutinase 4 (223 aa).

The signal sequence occupies residues 1–26 (MPLPLLPPLLLPLEALLDLALHLVDS). A disulfide bridge connects residues C60 and C133. Residue S144 is the Nucleophile of the active site. An intrachain disulfide couples C187 to C194. The active site involves D191. The active-site Proton donor/acceptor is the H203.

It belongs to the cutinase family. The 2 disulfide bonds play a critical role in holding the catalytic residues in juxta-position; reduction of the disulfide bridges results in the complete inactivation of the enzyme.

The protein localises to the secreted. It carries out the reaction cutin + H2O = cutin monomers.. In terms of biological role, catalyzes the hydrolysis of complex carboxylic polyesters found in the cell wall of plants. Degrades cutin, a macromolecule that forms the structure of the plant cuticle. Also degrades suberin, a specialized macromolecule found in the cell wall of various plant tissues. This Emericella nidulans (strain FGSC A4 / ATCC 38163 / CBS 112.46 / NRRL 194 / M139) (Aspergillus nidulans) protein is Cutinase 4.